The following is a 184-amino-acid chain: Isopentenyl-diphosphate Delta-isomerase (184 aa).

Residues His25 and His32 each contribute to the Mn(2+) site. A Nudix hydrolase domain is found at Pro30–Leu164. Residue Cys67 is part of the active site. His69 serves as a coordination point for Mn(2+). Mg(2+) is bound at residue Glu87. Positions 114 and 116 each coordinate Mn(2+). The active site involves Glu116.

It belongs to the IPP isomerase type 1 family. Homodimer. It depends on Mg(2+) as a cofactor. Mn(2+) serves as cofactor.

Its subcellular location is the cytoplasm. It catalyses the reaction isopentenyl diphosphate = dimethylallyl diphosphate. It participates in isoprenoid biosynthesis; dimethylallyl diphosphate biosynthesis; dimethylallyl diphosphate from isopentenyl diphosphate: step 1/1. In terms of biological role, catalyzes the 1,3-allylic rearrangement of the homoallylic substrate isopentenyl (IPP) to its highly electrophilic allylic isomer, dimethylallyl diphosphate (DMAPP). The polypeptide is Isopentenyl-diphosphate Delta-isomerase (Klebsiella pneumoniae subsp. pneumoniae (strain ATCC 700721 / MGH 78578)).